The primary structure comprises 241 residues: Centromere protein H (241 aa).

M1 carries the post-translational modification N-acetylmethionine. The segment at 1-24 is disordered; sequence MEEQPRERSEAGAEACEEKRGLSQ. Positions 28–186 form a coiled coil; it reads ERIEDRISLL…KEDVDKMENS (159 aa). K61 is covalently cross-linked (Glycyl lysine isopeptide (Lys-Gly) (interchain with G-Cter in SUMO2)). T62 is modified (phosphothreonine).

It belongs to the CENP-H/MCM16 family. Self-associates. Component of the CENPA-NAC complex, at least composed of CENPA, CENPC, CENPH, CENPM, CENPN, CENPT and CENPU. The CENPA-NAC complex interacts with the CENPA-CAD complex, composed of CENPI, CENPK, CENPL, CENPO, CENPP, CENPQ, CENPR and CENPS. Interacts directly with CENPK. Interacts with KIF2C and NDC80. Interacts with TRIM36. Abundantly expressed in thymus, spleen, uterus, ovary, testis and muscle, and weakly expressed in small intestine, lung and stomach. Barely detectable expression in kidney, liver, skin and prostate gland. Not detected in brain, heart or adrenal gland. Also expressed weakly in various hematopoietic cell lines.

It is found in the nucleus. It localises to the chromosome. The protein localises to the centromere. Its subcellular location is the kinetochore. Its function is as follows. Component of the CENPA-NAC (nucleosome-associated) complex, a complex that plays a central role in assembly of kinetochore proteins, mitotic progression and chromosome segregation. The CENPA-NAC complex recruits the CENPA-CAD (nucleosome distal) complex and may be involved in incorporation of newly synthesized CENPA into centromeres. Required for chromosome congression and efficiently align the chromosomes on a metaphase plate. The protein is Centromere protein H of Mus musculus (Mouse).